The following is a 390-amino-acid chain: Serpin B4 (390 aa).

Met-1 is subject to N-acetylmethionine.

This sequence belongs to the serpin family. Ov-serpin subfamily. As to expression, squamous cells.

The protein localises to the cytoplasm. Its function is as follows. May act as a protease inhibitor to modulate the host immune response against tumor cells. The polypeptide is Serpin B4 (SERPINB4) (Homo sapiens (Human)).